The following is a 447-amino-acid chain: uncharacterized protein (447 aa).

The protein to E.coli plasmid IncP-alpha RP4 protein TraN.

This is an uncharacterized protein from Haemophilus influenzae (strain ATCC 51907 / DSM 11121 / KW20 / Rd).